Here is a 708-residue protein sequence, read N- to C-terminus: Nicastrin (708 aa).

The N-terminal stretch at 1–27 is a signal peptide; sequence MATTRGGSGPDPGSRGLLLLSFSVVLA. Topologically, residues 28 to 668 are lumenal; that stretch reads GLCGGNSVER…IFLIASKELE (641 aa). N44, N54, and N128 each carry an N-linked (GlcNAc...) asparagine glycan. An intrachain disulfide couples C49 to C61. C139 and C158 are disulfide-bonded. N-linked (GlcNAc...) asparagine glycosylation is found at N186 and N203. 2 disulfides stabilise this stretch: C194–C212 and C229–C247. N-linked (GlcNAc...) asparagine glycosylation is found at N263, N386, N434, N463, N505, N529, N561, N572, N579, N593, and N611. C585 and C619 are oxidised to a cystine. The helical transmembrane segment at 669-689 threads the bilayer; that stretch reads FITLIVGFSTLVFSLIVTYCI. The Cytoplasmic segment spans residues 690–708; sequence NAKADVLFVAPREPGAVSY.

The protein belongs to the nicastrin family. As to quaternary structure, component of the gamma-secretase complex. The functional gamma-secretase complex is composed of at least four polypeptides: a presenilin homodimer (PSEN1 or PSEN2), nicastrin (NCSTN), APH1 (APH1A or APH1B) and PEN2. Binds to proteolytic processed C-terminal fragments C83 and C99 of the amyloid precursor protein (APP). Interacts with PSEN1 and PSEN2. N-glycosylated.

The protein resides in the membrane. It localises to the cytoplasmic vesicle membrane. The protein localises to the melanosome. In terms of biological role, essential subunit of the gamma-secretase complex, an endoprotease complex that catalyzes the intramembrane cleavage of integral membrane proteins such as Notch receptors and APP (amyloid-beta precursor protein). The gamma-secretase complex plays a role in Notch and Wnt signaling cascades and regulation of downstream processes via its role in processing key regulatory proteins, and by regulating cytosolic CTNNB1 levels. This chain is Nicastrin (Ncstn), found in Mus musculus (Mouse).